A 197-amino-acid polypeptide reads, in one-letter code: Secreted RxLR effector protein 48 (197 aa).

Residues 1 to 27 (MCCVSWNWVLACTFLLIFLSWWNCCND) form the signal peptide. A RxLR-dEER motif is present at residues 58–79 (RLLRVNLAANAEVLTHEIEEEK).

This sequence belongs to the RxLR effector family.

Its subcellular location is the secreted. The protein resides in the host nucleus. The protein localises to the host cytoplasm. Functionally, secreted effector that completely suppresses the host cell death induced by cell death-inducing proteins. The chain is Secreted RxLR effector protein 48 from Plasmopara viticola (Downy mildew of grapevine).